Consider the following 114-residue polypeptide: Ghrelin (114 aa).

A signal peptide spans 1–24 (MNFGKAAIFGVVLFCLLWTEGAQA). Thr-27 carries the O-decanoyl threonine; alternate lipid modification. Residue Thr-27 is the site of O-octanoyl threonine; alternate attachment. Positions 55-114 (GVEDDLAGEEIGVTFPLDMKMTQEQFQKQRAAVQDFLYSSLLSLGSVQDTEDKNENPQSQ) are cleaved as a propeptide — removed in mature form.

It belongs to the motilin family. Post-translationally, O-octanoylated by GOAT/MBOAT4. O-octanoylation or O-decanoylation is essential for activity. The O-decanoylated form ghrelin-27-C10 differs in the length of the carbon backbone of the carboxylic acid bound to Thr-27. 33% of frog ghrelin is O-decanoylated. In terms of processing, 80% of frog ghrelin has Asn-52 cleaved from its C-terminus giving rise to ghrelin-27. In terms of tissue distribution, high levels in stomach. Moderate levels in small intestine, pancreas and testis. Low levels in heart, lung and gall bladder.

The protein resides in the secreted. Its function is as follows. Ligand for growth hormone secretagogue receptor type 1 (GHSR). Induces the release of growth hormone from the pituitary. Has an appetite-stimulating effect, induces adiposity and stimulates gastric acid secretion. Involved in growth regulation. In Aquarana catesbeiana (American bullfrog), this protein is Ghrelin (GHRL).